A 256-amino-acid chain; its full sequence is Acetyl-coenzyme A carboxylase carboxyl transferase subunit alpha (256 aa).

The CoA carboxyltransferase C-terminal domain maps to 1–236 (MTDVARILKE…RSHLIDEITQ (236 aa)).

This sequence belongs to the AccA family. In terms of assembly, acetyl-CoA carboxylase is a heterohexamer composed of biotin carboxyl carrier protein (AccB), biotin carboxylase (AccC) and two subunits each of ACCase subunit alpha (AccA) and ACCase subunit beta (AccD).

The protein resides in the cytoplasm. The catalysed reaction is N(6)-carboxybiotinyl-L-lysyl-[protein] + acetyl-CoA = N(6)-biotinyl-L-lysyl-[protein] + malonyl-CoA. The protein operates within lipid metabolism; malonyl-CoA biosynthesis; malonyl-CoA from acetyl-CoA: step 1/1. In terms of biological role, component of the acetyl coenzyme A carboxylase (ACC) complex. First, biotin carboxylase catalyzes the carboxylation of biotin on its carrier protein (BCCP) and then the CO(2) group is transferred by the carboxyltransferase to acetyl-CoA to form malonyl-CoA. This chain is Acetyl-coenzyme A carboxylase carboxyl transferase subunit alpha, found in Streptococcus equi subsp. zooepidemicus (strain MGCS10565).